A 982-amino-acid chain; its full sequence is ATP-dependent DNA helicase Q5 (982 aa).

In terms of domain architecture, Helicase ATP-binding spans 39-213; the sequence is MAVVKGAEDV…FAALHLKQPV (175 aa). 52–59 contacts ATP; it reads MPTGAGKS. Residues 157–160 carry the DEAH box motif; sequence DEAH. Positions 241–398 constitute a Helicase C-terminal domain; the sequence is NLRDFCLKAL…NKPSDKATLL (158 aa). Cysteine 412, cysteine 428, cysteine 432, and cysteine 435 together coordinate Zn(2+). 2 positions are modified to phosphoserine: serine 489 and serine 492. Residues 491-621 form an interaction with POLR2A region; it reads GSGDEGRDEA…ASKDGQLYDM (131 aa). Threonine 527 carries the post-translational modification Phosphothreonine. The interval 653–726 is interaction with RAD51; that stretch reads PKRVGAGFSK…ALGSSVNCGD (74 aa). 2 disordered regions span residues 675–797 and 812–893; these read GKSH…PGKC and QTEG…AQEP. Phosphoserine; by CDK1 is present on serine 728.

The protein belongs to the helicase family. RecQ subfamily. As to quaternary structure, monomer. Interacts with TOP2A, TOP3A and TOP3B. Interacts with RNA polymerase II subunit POLR2A. Identified in a complex with the RNA polymerase II core bound to DNA. Interacts with RAD51. Interacts with WRN; this interaction stimulates WRN helicase activity on DNA fork duplexes. Interacts with MUS1; this interaction promotes MUS81-dependent mitotic DNA synthesis. Zn(2+) serves as cofactor. In terms of processing, phosphorylated by CDK1 at Ser-728; this phosphorylation is required for RECQL5-mediated disruption of RAD51 filaments on stalled replication forks.

It localises to the nucleus. The protein resides in the nucleoplasm. It carries out the reaction Couples ATP hydrolysis with the unwinding of duplex DNA by translocating in the 3'-5' direction.. The enzyme catalyses ATP + H2O = ADP + phosphate + H(+). DNA helicase that plays an important role in DNA replication, transcription and repair. Binds to the RNA polymerase II subunit POLR2A during transcription elongation and suppresses transcription-associated genomic instability. Also associates with POLR1A and enforces the stability of ribosomal DNA arrays. Plays an important role in mitotic chromosome separation after cross-over events and cell cycle progress. Mechanistically, removes RAD51 filaments protecting stalled replication forks at common fragile sites and stimulates MUS81-EME1 endonuclease leading to mitotic DNA synthesis. Required for efficient DNA repair, including repair of inter-strand cross-links. Stimulates DNA decatenation mediated by TOP2A. Prevents sister chromatid exchange and homologous recombination. This chain is ATP-dependent DNA helicase Q5 (Recql5), found in Mus musculus (Mouse).